Reading from the N-terminus, the 280-residue chain is Secreted RxLR effector protein 39 (280 aa).

A signal peptide spans 1-19; sequence MRGAYYVAIALLIVASCSA. Residues 49 to 70 carry the RxLR-dEER motif; sequence RVLRGSRDLKNKWAVHAGGEDR. The interval 229-249 is disordered; that stretch reads EVKARSSKRQRTNPMLNNMDG.

Belongs to the RxLR effector family.

The protein localises to the secreted. The protein resides in the host nucleus. Secreted effector that completely suppresses the host cell death induced by cell death-inducing proteins. The chain is Secreted RxLR effector protein 39 from Plasmopara viticola (Downy mildew of grapevine).